The following is a 101-amino-acid chain: Small ribosomal subunit protein uS14c (101 aa).

This sequence belongs to the universal ribosomal protein uS14 family. Part of the 30S ribosomal subunit.

It localises to the plastid. Its function is as follows. Binds 16S rRNA, required for the assembly of 30S particles. The chain is Small ribosomal subunit protein uS14c from Helicosporidium sp. subsp. Simulium jonesii (Green alga).